Here is a 239-residue protein sequence, read N- to C-terminus: RNA polymerase sigma-35 factor (239 aa).

Residues 1 to 27 constitute a propeptide that is removed on maturation; sequence MMKLKFYLVYLWYKVLLKLGIKTDEIY. A Polymerase core binding motif is present at residues 86-99; it reads DLISIGTIGLIKAV. The H-T-H motif DNA-binding region spans 206–225; that stretch reads QKDVADMLGISQSYISRLEK.

The protein belongs to the sigma-70 factor family. Post-translationally, proteolytically cleaved in the N-terminus probably by a SpoIIGA homolog to yield the active peptide.

Functionally, sigma factors are initiation factors that promote the attachment of RNA polymerase to specific initiation sites and are then released. This sigma factor directs the transcription of crystal protein genes, a sporulation-regulated event. In Bacillus anthracis, this protein is RNA polymerase sigma-35 factor (sigE).